Reading from the N-terminus, the 510-residue chain is 2,3-bisphosphoglycerate-independent phosphoglycerate mutase (510 aa).

Mn(2+) is bound by residues Asp14 and Ser64. Ser64 serves as the catalytic Phosphoserine intermediate. Substrate is bound by residues His125, 155–156 (RD), Arg187, Arg193, 259–262 (RADR), and Lys332. Residues Asp399, His403, Asp440, His441, and His459 each contribute to the Mn(2+) site.

It belongs to the BPG-independent phosphoglycerate mutase family. Monomer. Mn(2+) is required as a cofactor.

The enzyme catalyses (2R)-2-phosphoglycerate = (2R)-3-phosphoglycerate. It participates in carbohydrate degradation; glycolysis; pyruvate from D-glyceraldehyde 3-phosphate: step 3/5. Its function is as follows. Catalyzes the interconversion of 2-phosphoglycerate and 3-phosphoglycerate. This Pseudomonas savastanoi pv. phaseolicola (strain 1448A / Race 6) (Pseudomonas syringae pv. phaseolicola (strain 1448A / Race 6)) protein is 2,3-bisphosphoglycerate-independent phosphoglycerate mutase.